A 721-amino-acid chain; its full sequence is bZIP transcription factor 17 (721 aa).

Disordered regions lie at residues 1 to 51 (MAEP…LMSD) and 87 to 232 (QEQF…EKKR). Topologically, residues 1-366 (MAEPITKEQP…KSEAKTKKVA (366 aa)) are cytoplasmic. Pro residues predominate over residues 9–25 (QPPPPAPDPNSTYPPPS). The segment covering 125–141 (ESPRDSDDRCSGADHNL) has biased composition (basic and acidic residues). Positions 146–170 (PLSSQGSGNCGSDVSEATNESSPKS) are enriched in polar residues. Positions 204-216 (DESRNSKYRRSGE) are enriched in basic and acidic residues. The region spanning 228–288 (DEKKRARLMR…AENATLRQQL (61 aa)) is the bZIP domain. The basic motif stretch occupies residues 230 to 261 (KKRARLMRNRESAQLSRQRKKHYVEELEEKVR). The tract at residues 267–274 (ITDLNGKI) is leucine-zipper. Residues 337-359 (PRLKPQNTLGTSKAKKSESKKSE) are disordered. A helical transmembrane segment spans residues 367–387 (SISFLGLLFCLFLFGALAPIV). Residues 388 to 721 (NVNYGGISGA…RSGAPHLVTT (334 aa)) lie on the Lumenal side of the membrane. A compositionally biased stretch (polar residues) spans 422 to 436 (TSRSGAGTGVSNSNG). The disordered stretch occupies residues 422–462 (TSRSGAGTGVSNSNGMHRGRDSDRGARKNISATESSVTPGN). Asn-450, Asn-462, Asn-609, and Asn-617 each carry an N-linked (GlcNAc...) asparagine glycan. Positions 451–462 (ISATESSVTPGN) are enriched in polar residues. An RRIL cleavage motif motif is present at residues 627-630 (RRIL). Residues Asn-643 and Asn-651 are each glycosylated (N-linked (GlcNAc...) asparagine).

Belongs to the bZIP family. Interacts with BZIP28.

Its subcellular location is the endoplasmic reticulum membrane. The protein localises to the golgi apparatus membrane. The protein resides in the nucleus. Its function is as follows. Transcriptional activator involved in salt and osmotic stress responses. Functions as a stress sensor and transducer in a signaling pathway that resembles an ER stress response. Following salt stress, BZIP17 is cleaved by SBT6.1 (S1P) and S2P at the C-terminus and the N-terminal bZIP component is translocated to the nucleus, where it activates the expression of salt stress response genes. Functions as a stress sensor and transducer in ER stress signaling pathway. ER stress induces proteolysis of BZIP17 by SBT6.1 (S1P) and S2P, and the N-terminal bZIP component is translocated to the nucleus, where it activates the expression and production of ER chaperones, as well as protein involved in brassinosteroid (BR) signaling, which is required for stress acclimation and growth. This chain is bZIP transcription factor 17, found in Arabidopsis thaliana (Mouse-ear cress).